We begin with the raw amino-acid sequence, 582 residues long: Semenogelin-2 (582 aa).

The first 23 residues, 1–23 (MKSIILFVLSLLLILEKQAAVMG), serve as a signal peptide directing secretion. Disordered stretches follow at residues 25–62 (KGGS…SKGS), 91–190 (HKTT…QGGS), and 272–553 (NLNQ…FSGA). The span at 50–59 (GQKDKQHTES) shows a compositional bias: basic and acidic residues. Positions 92–134 (KTTKSKQHLRRHQRLLNYKQKGRGRVKPKRHFHLIVIHRKGGQ) are enriched in basic residues. 2 stretches are compositionally biased toward polar residues: residues 137-161 (HGTQ…QYSN) and 174-190 (EQAS…QGGS). Basic and acidic residues predominate over residues 293-305 (TEERQPNHEEKSV). Positions 325-335 (KSQNQVTIPSQ) are enriched in polar residues. Residues 336–345 (DQEHGHKENK) are compositionally biased toward basic and acidic residues. The segment covering 385–395 (KSQNQVAIPSQ) has biased composition (polar residues). Residues 396–405 (DQEHGHKENK) show a composition bias toward basic and acidic residues. Residues 445 to 455 (KSQNQVTIPSQ) show a composition bias toward polar residues. A compositionally biased stretch (basic and acidic residues) spans 456-465 (DQEHGHKENK). Composition is skewed to polar residues over residues 487-498 (KDVSQSSLSFQT) and 506-529 (SQIQ…NSGK). Residues 530-546 (SADRKQDLLSHEQEGRY) show a composition bias toward basic and acidic residues.

It belongs to the semenogelin family. Interacts with SERPINA5.

The protein localises to the secreted. Participates in the formation of a gel matrix (sperm coagulum) entrapping the accessory gland secretions and ejaculated spermatozoa. This Macaca fascicularis (Crab-eating macaque) protein is Semenogelin-2 (SEMG2).